Here is a 60-residue protein sequence, read N- to C-terminus: Mannitol-specific phosphotransferase enzyme IIA component (60 aa).

One can recognise a PTS EIIA type-2 domain in the interval 2 to 60 (SELFSNDNIFLNVNVNSQNEAIEKAGKALVDSGAVTDAYIQVVSTFMGNGLAIPHGTDD). Residue histidine 56 is the Tele-phosphohistidine intermediate of the active site. Histidine 56 is subject to Phosphohistidine; by HPr.

As to quaternary structure, homodimer or homotrimer. Seems to be a monomer when not phosphorylated.

The protein localises to the cytoplasm. The phosphoenolpyruvate-dependent sugar phosphotransferase system (sugar PTS), a major carbohydrate active transport system, catalyzes the phosphorylation of incoming sugar substrates concomitantly with their translocation across the cell membrane. The enzyme II CmtAB PTS system is involved in D-mannitol transport. The polypeptide is Mannitol-specific phosphotransferase enzyme IIA component (Staphylococcus aureus).